Reading from the N-terminus, the 633-residue chain is DEAD-box ATP-dependent RNA helicase 37 (633 aa).

Positions 1–110 are disordered; that stretch reads MSASWADVAD…WNNRSGGWDR (110 aa). Ser-2 is modified (N-acetylserine). Polar residues predominate over residues 11–25; that stretch reads SENTGSGSSNQNSHP. Gly residues-rich tracts occupy residues 68–80 and 87–101; these read GGSG…GGGY and PGSG…GGGW. Positions 159 to 187 match the Q motif motif; that stretch reads NTFAEIDLGEALNLNIRRCKYVKPTPVQR. The region spanning 190–374 is the Helicase ATP-binding domain; that stretch reads IPILLEGRDL…ADFLANYIFL (185 aa). 203-210 contributes to the ATP binding site; that stretch reads AQTGSGKT. Residues 318–321 carry the DEAD box motif; it reads DEAD. The Helicase C-terminal domain maps to 401–552; the sequence is HLMDLLHAQR…EVPEWLTRYA (152 aa). The interval 555–600 is disordered; that stretch reads SSFGGGKNRRSGGRFGGRDFRREGSFGSGRGGYGGGGGGYGGGGGY. Gly residues predominate over residues 580–600; the sequence is FGSGRGGYGGGGGGYGGGGGY.

It belongs to the DEAD box helicase family. DDX3/DED1 subfamily.

It catalyses the reaction ATP + H2O = ADP + phosphate + H(+). This chain is DEAD-box ATP-dependent RNA helicase 37 (RH37), found in Arabidopsis thaliana (Mouse-ear cress).